Here is a 269-residue protein sequence, read N- to C-terminus: Formamidopyrimidine-DNA glycosylase (269 aa).

The active-site Schiff-base intermediate with DNA is Pro-2. The active-site Proton donor is Glu-3. Lys-57 serves as the catalytic Proton donor; for beta-elimination activity. The DNA site is built by His-90, Arg-109, and Lys-150. The segment at 235 to 269 adopts an FPG-type zinc-finger fold; sequence QVYGRKGEPCRVCGTPIVATKHAQRATFYCRHCQK. Arg-259 acts as the Proton donor; for delta-elimination activity in catalysis.

The protein belongs to the FPG family. In terms of assembly, monomer. The cofactor is Zn(2+).

The catalysed reaction is Hydrolysis of DNA containing ring-opened 7-methylguanine residues, releasing 2,6-diamino-4-hydroxy-5-(N-methyl)formamidopyrimidine.. It carries out the reaction 2'-deoxyribonucleotide-(2'-deoxyribose 5'-phosphate)-2'-deoxyribonucleotide-DNA = a 3'-end 2'-deoxyribonucleotide-(2,3-dehydro-2,3-deoxyribose 5'-phosphate)-DNA + a 5'-end 5'-phospho-2'-deoxyribonucleoside-DNA + H(+). Functionally, involved in base excision repair of DNA damaged by oxidation or by mutagenic agents. Acts as a DNA glycosylase that recognizes and removes damaged bases. Has a preference for oxidized purines, such as 7,8-dihydro-8-oxoguanine (8-oxoG). Has AP (apurinic/apyrimidinic) lyase activity and introduces nicks in the DNA strand. Cleaves the DNA backbone by beta-delta elimination to generate a single-strand break at the site of the removed base with both 3'- and 5'-phosphates. In Salmonella newport (strain SL254), this protein is Formamidopyrimidine-DNA glycosylase.